A 292-amino-acid polypeptide reads, in one-letter code: Small ribosomal subunit biogenesis GTPase RsgA (292 aa).

The 158-residue stretch at Arg-64–Leu-221 folds into the CP-type G domain. GTP is bound by residues Asn-113 to Asp-116 and Gly-164 to Thr-172. Zn(2+) contacts are provided by Cys-245, Cys-250, His-252, and Cys-258.

This sequence belongs to the TRAFAC class YlqF/YawG GTPase family. RsgA subfamily. Monomer. Associates with 30S ribosomal subunit, binds 16S rRNA. It depends on Zn(2+) as a cofactor.

The protein resides in the cytoplasm. Its function is as follows. One of several proteins that assist in the late maturation steps of the functional core of the 30S ribosomal subunit. Helps release RbfA from mature subunits. May play a role in the assembly of ribosomal proteins into the subunit. Circularly permuted GTPase that catalyzes slow GTP hydrolysis, GTPase activity is stimulated by the 30S ribosomal subunit. This is Small ribosomal subunit biogenesis GTPase RsgA from Clostridium botulinum (strain Kyoto / Type A2).